We begin with the raw amino-acid sequence, 161 residues long: Nucleotide-binding protein Gbem_0619 (161 aa).

It belongs to the YajQ family.

Its function is as follows. Nucleotide-binding protein. The chain is Nucleotide-binding protein Gbem_0619 from Citrifermentans bemidjiense (strain ATCC BAA-1014 / DSM 16622 / JCM 12645 / Bem) (Geobacter bemidjiensis).